A 527-amino-acid chain; its full sequence is Transcription factor bHLH157 (527 aa).

2 disordered regions span residues 295 to 318 and 335 to 368; these read SGVNQSKRRKLDTSSAHSSSLFPQ and SSIGGNWKKPHEEGVKKKRAKAGESRRPRPKDRQ. Positions 307 to 318 are enriched in polar residues; that stretch reads TSSAHSSSLFPQ. The Nuclear localization signal motif lies at 341–348; it reads WKKPHEEG. Residues 343 to 368 are compositionally biased toward basic and acidic residues; that stretch reads KPHEEGVKKKRAKAGESRRPRPKDRQ. The region spanning 354-403 is the bHLH domain; that stretch reads AKAGESRRPRPKDRQMIQDRIKELRGMIPNGAKCSIDTLLDLTIKHMVFM.

This sequence belongs to the bHLH protein family. LHW subfamily. In terms of assembly, homodimer.

The protein localises to the nucleus. In terms of biological role, transcription factor that may regulate root development. This is Transcription factor bHLH157 (BHLH157) from Arabidopsis thaliana (Mouse-ear cress).